The primary structure comprises 309 residues: Protein FdhE (309 aa).

This sequence belongs to the FdhE family.

The protein localises to the cytoplasm. Necessary for formate dehydrogenase activity. This Escherichia coli O9:H4 (strain HS) protein is Protein FdhE.